The primary structure comprises 546 residues: Apolipoprotein N-acyltransferase 1 (546 aa).

Transmembrane regions (helical) follow at residues 14–34, 41–61, 62–82, 85–105, 122–142, 151–171, and 194–214; these read FLLF…PLLP, AYGA…FAVV, FWGG…LFVF, VALC…CLAL, LVWL…PYGV, LPLI…LVVF, and FLSA…LCGF. The CN hydrolase domain occupies 233–502; sequence AKVALVQPNG…PGVLVADVPI (270 aa). Glu280 acts as the Proton acceptor in catalysis. Lys361 is an active-site residue. Cys413 acts as the Nucleophile in catalysis. Residues 514 to 534 form a helical membrane-spanning segment; it reads GDALGVFFCVASLFILIAGGV.

It belongs to the CN hydrolase family. Apolipoprotein N-acyltransferase subfamily.

The protein localises to the cell inner membrane. It catalyses the reaction N-terminal S-1,2-diacyl-sn-glyceryl-L-cysteinyl-[lipoprotein] + a glycerophospholipid = N-acyl-S-1,2-diacyl-sn-glyceryl-L-cysteinyl-[lipoprotein] + a 2-acyl-sn-glycero-3-phospholipid + H(+). It participates in protein modification; lipoprotein biosynthesis (N-acyl transfer). Functionally, catalyzes the phospholipid dependent N-acylation of the N-terminal cysteine of apolipoprotein, the last step in lipoprotein maturation. The chain is Apolipoprotein N-acyltransferase 1 from Treponema pallidum (strain Nichols).